The primary structure comprises 243 residues: Triosephosphate isomerase (243 aa).

Position 9–11 (9–11) interacts with substrate; it reads NWK. The active-site Electrophile is H98. E167 (proton acceptor) is an active-site residue. Residues G173, S205, and 226–227 contribute to the substrate site; that span reads GG.

It belongs to the triosephosphate isomerase family. In terms of assembly, homodimer.

It localises to the cytoplasm. The enzyme catalyses D-glyceraldehyde 3-phosphate = dihydroxyacetone phosphate. The protein operates within carbohydrate biosynthesis; gluconeogenesis. Its pathway is carbohydrate degradation; glycolysis; D-glyceraldehyde 3-phosphate from glycerone phosphate: step 1/1. In terms of biological role, involved in the gluconeogenesis. Catalyzes stereospecifically the conversion of dihydroxyacetone phosphate (DHAP) to D-glyceraldehyde-3-phosphate (G3P). The sequence is that of Triosephosphate isomerase from Mesomycoplasma hyorhinis (Mycoplasma hyorhinis).